Here is a 317-residue protein sequence, read N- to C-terminus: Ribosomal protein L11 methyltransferase (317 aa).

Residues threonine 158, glycine 179, aspartate 201, and asparagine 244 each coordinate S-adenosyl-L-methionine.

Belongs to the methyltransferase superfamily. PrmA family.

The protein localises to the cytoplasm. It catalyses the reaction L-lysyl-[protein] + 3 S-adenosyl-L-methionine = N(6),N(6),N(6)-trimethyl-L-lysyl-[protein] + 3 S-adenosyl-L-homocysteine + 3 H(+). Methylates ribosomal protein L11. The sequence is that of Ribosomal protein L11 methyltransferase from Streptococcus equi subsp. zooepidemicus (strain H70).